A 273-amino-acid chain; its full sequence is Acetyl-coenzyme A carboxylase carboxyl transferase subunit alpha (273 aa).

Residues 1 to 244 form the CoA carboxyltransferase C-terminal domain; that stretch reads MKKATQSKAW…KVVLKQALDE (244 aa).

The protein belongs to the AccA family. Acetyl-CoA carboxylase is a heterohexamer composed of biotin carboxyl carrier protein (AccB), biotin carboxylase (AccC) and two subunits each of ACCase subunit alpha (AccA) and ACCase subunit beta (AccD).

It localises to the cytoplasm. The catalysed reaction is N(6)-carboxybiotinyl-L-lysyl-[protein] + acetyl-CoA = N(6)-biotinyl-L-lysyl-[protein] + malonyl-CoA. It participates in lipid metabolism; malonyl-CoA biosynthesis; malonyl-CoA from acetyl-CoA: step 1/1. In terms of biological role, component of the acetyl coenzyme A carboxylase (ACC) complex. First, biotin carboxylase catalyzes the carboxylation of biotin on its carrier protein (BCCP) and then the CO(2) group is transferred by the carboxyltransferase to acetyl-CoA to form malonyl-CoA. The sequence is that of Acetyl-coenzyme A carboxylase carboxyl transferase subunit alpha from Acinetobacter baumannii (strain AB0057).